The sequence spans 371 residues: Protease PrtS (371 aa).

Residue His-169 coordinates Zn(2+). Residue Glu-170 is part of the active site. The Zn(2+) site is built by His-173 and Glu-193. His-273 serves as the catalytic Proton donor. Residues 352–371 (KEEDKDKGKDEGKDKAETKV) are disordered.

It belongs to the peptidase M4 family. It depends on Zn(2+) as a cofactor.

Its subcellular location is the secreted. Its activity is regulated as follows. Inhibited by 8 mM 1,10-phenanthroline, but not by EDTA or PMSF. Its function is as follows. Metalloprotease involved in the inhibition of insect antibacterial peptides. Reduces the antibacterial activity of G.mellonella hemolymph by 50%. Reduces the antibacterial activity of cecropin A by 80% and completely inhibits cecropin B. This is Protease PrtS from Photorhabdus sp. (strain Az29).